The chain runs to 438 residues: Putative truncated GMC-type inactive oxidoreductase L894 (438 aa).

The first 26 residues, 1–26, serve as a signal peptide directing secretion; the sequence is MYVFLLFSRYKIFYVYIKKMAHRSRC. Position 79-109 (79-109) interacts with FAD; it reads DIVIIGAGAAGCVLAYYLTKFSDLKIILLEA.

The protein belongs to the GMC oxidoreductase family. FAD is required as a cofactor.

Its subcellular location is the virion. The chain is Putative truncated GMC-type inactive oxidoreductase L894 from Acanthamoeba polyphaga (Amoeba).